Reading from the N-terminus, the 104-residue chain is Large ribosomal subunit protein bL21 (104 aa).

Belongs to the bacterial ribosomal protein bL21 family. In terms of assembly, part of the 50S ribosomal subunit. Contacts protein L20.

Its function is as follows. This protein binds to 23S rRNA in the presence of protein L20. The polypeptide is Large ribosomal subunit protein bL21 (Endomicrobium trichonymphae).